A 292-amino-acid polypeptide reads, in one-letter code: Elongation factor Ts (292 aa).

An involved in Mg(2+) ion dislocation from EF-Tu region spans residues 79–82 (TDFV).

The protein belongs to the EF-Ts family.

The protein localises to the cytoplasm. In terms of biological role, associates with the EF-Tu.GDP complex and induces the exchange of GDP to GTP. It remains bound to the aminoacyl-tRNA.EF-Tu.GTP complex up to the GTP hydrolysis stage on the ribosome. This Xanthomonas axonopodis pv. citri (strain 306) protein is Elongation factor Ts.